The sequence spans 140 residues: Nucleoside diphosphate kinase (140 aa).

Residues Lys-11, Phe-59, Arg-87, Thr-93, Arg-104, and Asn-114 each coordinate ATP. His-117 functions as the Pros-phosphohistidine intermediate in the catalytic mechanism.

This sequence belongs to the NDK family. In terms of assembly, homotetramer. It depends on Mg(2+) as a cofactor.

Its subcellular location is the cytoplasm. It carries out the reaction a 2'-deoxyribonucleoside 5'-diphosphate + ATP = a 2'-deoxyribonucleoside 5'-triphosphate + ADP. It catalyses the reaction a ribonucleoside 5'-diphosphate + ATP = a ribonucleoside 5'-triphosphate + ADP. Its function is as follows. Major role in the synthesis of nucleoside triphosphates other than ATP. The ATP gamma phosphate is transferred to the NDP beta phosphate via a ping-pong mechanism, using a phosphorylated active-site intermediate. This is Nucleoside diphosphate kinase from Acidiphilium cryptum (strain JF-5).